A 688-amino-acid polypeptide reads, in one-letter code: UvrABC system protein B (688 aa).

One can recognise a Helicase ATP-binding domain in the interval 31–414 (GRITAGETDV…LGIADGVVEQ (384 aa)). Residue 44 to 51 (GATGTGKS) coordinates ATP. The short motif at 97–120 (YYDYYQPEAYVPQTDTFIEKDSSI) is the Beta-hairpin element. Positions 434 to 600 (QIDDLLEEIR…PLRKRIADIT (167 aa)) constitute a Helicase C-terminal domain. The segment at 614–633 (LAGRDQKRKSPTPSLRSGGI) is disordered. Residues 642-677 (ESLIADLNAQMLAAAGELKFELAARLRDELSDLKRD) form the UVR domain.

The protein belongs to the UvrB family. In terms of assembly, forms a heterotetramer with UvrA during the search for lesions. Interacts with UvrC in an incision complex.

Its subcellular location is the cytoplasm. Its function is as follows. The UvrABC repair system catalyzes the recognition and processing of DNA lesions. A damage recognition complex composed of 2 UvrA and 2 UvrB subunits scans DNA for abnormalities. Upon binding of the UvrA(2)B(2) complex to a putative damaged site, the DNA wraps around one UvrB monomer. DNA wrap is dependent on ATP binding by UvrB and probably causes local melting of the DNA helix, facilitating insertion of UvrB beta-hairpin between the DNA strands. Then UvrB probes one DNA strand for the presence of a lesion. If a lesion is found the UvrA subunits dissociate and the UvrB-DNA preincision complex is formed. This complex is subsequently bound by UvrC and the second UvrB is released. If no lesion is found, the DNA wraps around the other UvrB subunit that will check the other stand for damage. The sequence is that of UvrABC system protein B from Leifsonia xyli subsp. xyli (strain CTCB07).